Here is a 475-residue protein sequence, read N- to C-terminus: Cytosolic non-specific dipeptidase (475 aa).

Residue S58 is modified to Phosphoserine. Residue H99 coordinates Mn(2+). Residue D101 is part of the active site. Position 132 (D132) interacts with Mn(2+). Catalysis depends on E166, which acts as the Proton acceptor. Substrate is bound by residues E166–E167, D195, and H228. The Mn(2+) site is built by E167 and D195. A Phosphoserine modification is found at S299. 4 residues coordinate substrate: T330, R343, S417, and H445. Mn(2+) is bound at residue H445.

The protein belongs to the peptidase M20A family. In terms of assembly, homodimer. Mn(2+) is required as a cofactor. In terms of tissue distribution, highly expressed in the parafascicular nucleus of the thalamus, tuberomammillary nucleus of the hypothalamus and the mitral cell layer of the olfactory bulb.

It is found in the cytoplasm. It catalyses the reaction Hydrolysis of dipeptides, preferentially hydrophobic dipeptides including prolyl amino acids.. It carries out the reaction L-threonyl-L-threonine + H2O = 2 L-threonine. The enzyme catalyses L-threonyl-L-serine + H2O = L-threonine + L-serine. The catalysed reaction is L-seryl-L-threonine + H2O = L-threonine + L-serine. It catalyses the reaction L-cysteinylglycine + H2O = L-cysteine + glycine. It carries out the reaction L-alanyl-L-cysteine + H2O = L-cysteine + L-alanine. The enzyme catalyses (S)-lactate + L-phenylalanine = N-[(S)-lactoyl]-L-phenylalanine + H2O. Its activity is regulated as follows. Inhibited by bestatin. Its function is as follows. Catalyzes the peptide bond hydrolysis in dipeptides, displaying a non-redundant activity toward threonyl dipeptides. Mediates threonyl dipeptide catabolism in a tissue-specific way. Has high dipeptidase activity toward cysteinylglycine, an intermediate metabolite in glutathione metabolism. Metabolizes N-lactoyl-amino acids, both through hydrolysis to form lactic acid and amino acids, as well as through their formation by reverse proteolysis. Plays a role in the regulation of cell cycle arrest and apoptosis. This chain is Cytosolic non-specific dipeptidase (Cndp2), found in Mus musculus (Mouse).